The following is a 506-amino-acid chain: Maturase K (506 aa).

This sequence belongs to the intron maturase 2 family. MatK subfamily.

It localises to the plastid. It is found in the chloroplast. Functionally, usually encoded in the trnK tRNA gene intron. Probably assists in splicing its own and other chloroplast group II introns. The sequence is that of Maturase K from Uncarina grandidieri (Mouse trap tree).